Consider the following 414-residue polypeptide: 2,3-diketo-5-methylthiopentyl-1-phosphate enolase (414 aa).

The active-site Proton acceptor is the Lys-99. Residues Lys-148, 174–177, His-265, Gly-338, and 360–361 contribute to the substrate site; these read KDDE and GG. Positions 174, 176, and 177 each coordinate Mg(2+). Residue Lys-174 is modified to N6-carboxylysine.

The protein belongs to the RuBisCO large chain family. Type IV subfamily. In terms of assembly, homodimer. The cofactor is Mg(2+).

The enzyme catalyses 5-methylsulfanyl-2,3-dioxopentyl phosphate = 2-hydroxy-5-methylsulfanyl-3-oxopent-1-enyl phosphate. Its pathway is amino-acid biosynthesis; L-methionine biosynthesis via salvage pathway; L-methionine from S-methyl-5-thio-alpha-D-ribose 1-phosphate: step 3/6. Catalyzes the enolization of 2,3-diketo-5-methylthiopentyl-1-phosphate (DK-MTP-1-P) into 2-hydroxy-3-keto-5-methylthiopentenyl-1-phosphate (HK-MTPenyl-1-P). The sequence is that of 2,3-diketo-5-methylthiopentyl-1-phosphate enolase from Bacillus cytotoxicus (strain DSM 22905 / CIP 110041 / 391-98 / NVH 391-98).